Here is a 166-residue protein sequence, read N- to C-terminus: 2S seed storage protein 4 (166 aa).

The signal sequence occupies residues 1–21 (MANKLFLVCAALALCFILTNA). 2 propeptides span residues 22–37 (SVYR…DASN) and 73–88 (GPSL…DIEN).

Belongs to the 2S seed storage albumins family. In terms of assembly, the mature protein consists of a small and a large chain linked by disulfide bonds.

In terms of biological role, this is a 2S seed storage protein. In Arabidopsis thaliana (Mouse-ear cress), this protein is 2S seed storage protein 4 (AT2S4).